Consider the following 264-residue polypeptide: Acyl-[acyl-carrier-protein]--UDP-N-acetylglucosamine O-acyltransferase (264 aa).

Belongs to the transferase hexapeptide repeat family. LpxA subfamily. As to quaternary structure, homotrimer.

The protein localises to the cytoplasm. The enzyme catalyses a (3R)-hydroxyacyl-[ACP] + UDP-N-acetyl-alpha-D-glucosamine = a UDP-3-O-[(3R)-3-hydroxyacyl]-N-acetyl-alpha-D-glucosamine + holo-[ACP]. It functions in the pathway glycolipid biosynthesis; lipid IV(A) biosynthesis; lipid IV(A) from (3R)-3-hydroxytetradecanoyl-[acyl-carrier-protein] and UDP-N-acetyl-alpha-D-glucosamine: step 1/6. Its function is as follows. Involved in the biosynthesis of lipid A, a phosphorylated glycolipid that anchors the lipopolysaccharide to the outer membrane of the cell. The chain is Acyl-[acyl-carrier-protein]--UDP-N-acetylglucosamine O-acyltransferase from Rickettsia conorii (strain ATCC VR-613 / Malish 7).